The chain runs to 90 residues: UPF0298 protein BLi01717/BL02989 (90 aa).

The protein belongs to the UPF0298 family.

The protein resides in the cytoplasm. This is UPF0298 protein BLi01717/BL02989 from Bacillus licheniformis (strain ATCC 14580 / DSM 13 / JCM 2505 / CCUG 7422 / NBRC 12200 / NCIMB 9375 / NCTC 10341 / NRRL NRS-1264 / Gibson 46).